A 466-amino-acid polypeptide reads, in one-letter code: Phytase A (466 aa).

Residues 1 to 19 (MAVLSVLLPITFLLSSVTG) form the signal peptide. An intrachain disulfide couples cysteine 30 to cysteine 39. 1D-myo-inositol hexakisphosphate is bound by residues glutamine 49, tyrosine 50, arginine 80, histidine 81, arginine 84, and threonine 87. Disulfide bonds link cysteine 70–cysteine 413, cysteine 214–cysteine 464, cysteine 263–cysteine 281, and cysteine 435–cysteine 443. Residue histidine 81 is the Nucleophile of the active site. Asparagine 104 and asparagine 119 each carry an N-linked (GlcNAc...) asparagine glycan. Arginine 164 is a binding site for 1D-myo-inositol hexakisphosphate. N-linked (GlcNAc...) asparagine glycans are attached at residues asparagine 206 and asparagine 219. Lysine 300 is a 1D-myo-inositol hexakisphosphate binding site. N-linked (GlcNAc...) asparagine glycosylation is found at asparagine 338 and asparagine 351. 1D-myo-inositol hexakisphosphate contacts are provided by histidine 360 and aspartate 361. N-linked (GlcNAc...) asparagine glycosylation occurs at asparagine 375.

Belongs to the histidine acid phosphatase family. Monomer.

Its subcellular location is the secreted. The enzyme catalyses 1D-myo-inositol hexakisphosphate + H2O = 1D-myo-inositol 1,2,4,5,6-pentakisphosphate + phosphate. The catalysed reaction is 1D-myo-inositol 1,2,4,5,6-pentakisphosphate + H2O = 1D-myo-inositol 1,2,5,6-tetrakisphosphate + phosphate. It catalyses the reaction 1D-myo-inositol 1,2,5,6-tetrakisphosphate + H2O = 1D-myo-inositol 1,2,6-trisphosphate + phosphate. It carries out the reaction 1D-myo-inositol 1,2,6-trisphosphate + H2O = 1D-myo-inositol 1,2-bisphosphate + phosphate. The enzyme catalyses 1D-myo-inositol 1,2-bisphosphate + H2O = 1D-myo-inositol 2-phosphate + phosphate. Functionally, catalyzes the phosphate monoester hydrolysis of phytic acid (myo-inositol hexakisphosphate), which results in the stepwise formation of myo-inositol pentakis-, tetrakis-, tris-, bis-, and monophosphates, as well as the liberation of inorganic phosphate. Myo-inositol 2-monophosphate is the end product. In Aspergillus oryzae (strain ATCC 42149 / RIB 40) (Yellow koji mold), this protein is Phytase A (phyA).